A 320-amino-acid chain; its full sequence is ATP-dependent 6-phosphofructokinase (320 aa).

Position 12 (Gly12) interacts with ATP. 22-26 (RGVVR) is a binding site for ADP. ATP is bound by residues 73–74 (RF) and 103–106 (GDGS). Mg(2+) is bound at residue Asp104. 126–128 (TID) contributes to the substrate binding site. Asp128 serves as the catalytic Proton acceptor. ADP is bound at residue Arg155. Substrate is bound by residues Arg163 and 170–172 (MGR). ADP contacts are provided by residues 186–188 (GCE), Lys212, and 214–216 (KKH). Substrate-binding positions include Glu223, Arg244, and 250–253 (HIQR).

The protein belongs to the phosphofructokinase type A (PFKA) family. ATP-dependent PFK group I subfamily. Prokaryotic clade 'B1' sub-subfamily. As to quaternary structure, homotetramer. It depends on Mg(2+) as a cofactor.

The protein resides in the cytoplasm. The catalysed reaction is beta-D-fructose 6-phosphate + ATP = beta-D-fructose 1,6-bisphosphate + ADP + H(+). It functions in the pathway carbohydrate degradation; glycolysis; D-glyceraldehyde 3-phosphate and glycerone phosphate from D-glucose: step 3/4. With respect to regulation, allosterically activated by ADP and other diphosphonucleosides, and allosterically inhibited by phosphoenolpyruvate. Its function is as follows. Catalyzes the phosphorylation of D-fructose 6-phosphate to fructose 1,6-bisphosphate by ATP, the first committing step of glycolysis. This chain is ATP-dependent 6-phosphofructokinase, found in Aliivibrio salmonicida (strain LFI1238) (Vibrio salmonicida (strain LFI1238)).